A 78-amino-acid polypeptide reads, in one-letter code: Large ribosomal subunit protein bL28 (78 aa).

The interval 1-27 is disordered; that stretch reads MSAYCQVTGRKPSFGKSVSHSHRRTNR.

The protein belongs to the bacterial ribosomal protein bL28 family.

In Corynebacterium kroppenstedtii (strain DSM 44385 / JCM 11950 / CIP 105744 / CCUG 35717), this protein is Large ribosomal subunit protein bL28.